The following is a 193-amino-acid chain: Protein SPEAR3 (193 aa).

2 disordered regions span residues 1 to 50 (MGSS…GVAQ) and 85 to 104 (GYPS…SSPP). A compositionally biased stretch (low complexity) spans 14-26 (SSSSSPTSSSSSP). The short motif at 44-52 (RGLGVAQLE) is the SPL element. The span at 86–101 (YPSIPSSSPSFSYASS) shows a compositional bias: low complexity. The EAR signature appears at 187 to 193 (LDLELRL).

In terms of assembly, interacts with TPL and the TPR corepressors TPR1, TPR2, TPR3, TPR4, and with the TCP transcription factors TCP2, TCP3, TCP4, TCP5, TCP10, TCP13, TCP17 and TCP24. Interacts with SPL and SPEAR2. In terms of tissue distribution, expressed in shoot apical meristem, cotyledons and leaves. Detected at the leaf margins and in the vascular bundles at the base of the leaves.

Its subcellular location is the nucleus. In terms of biological role, transcriptional regulator of leaf development. Acts as an adapter-like transcriptional repressor recruiting TPL/TPR corepressors to inhibit the CIN-like TCP transcription factors. This is Protein SPEAR3 from Arabidopsis thaliana (Mouse-ear cress).